The following is a 384-amino-acid chain: F-box only protein 5 (384 aa).

The interval 25–67 (EVKGHKVSPRKTGALSLRSPAATNVSTPLESRSKGPHNKENYQ) is disordered. The span at 45 to 54 (AATNVSTPLE) shows a compositional bias: polar residues. Residues 55 to 67 (SRSKGPHNKENYQ) are compositionally biased toward basic and acidic residues. In terms of domain architecture, F-box spans 187–234 (CKLMRKDMRHILARILGLLGDCDLISCTKVSRTWRKIICQDQLALQRW). A ZBR-type zinc finger spans residues 311 to 359 (SLRRCSRCSSPARFDAVMQRAVCTRISCAFEFCTLCQSAFHDSTPCRNT). Positions 315, 318, 333, 338, 343, 346, 351, and 356 each coordinate Zn(2+).

Part of a SCF (SKP1-cullin-F-box) protein ligase complex.

It is found in the nucleus. The protein localises to the cytoplasm. It functions in the pathway protein modification; protein ubiquitination. During embryonic development, regulates the integrity of the genome and therefore the cell cycle progression by preventing rereplication through an APC-Cdh1-dependent mechanism. This Danio rerio (Zebrafish) protein is F-box only protein 5.